The primary structure comprises 450 residues: Signal recognition particle protein (450 aa).

GTP contacts are provided by residues 107–114, 190–194, and 248–251; these read GLQGSGKT, DTAGR, and TKTD.

It belongs to the GTP-binding SRP family. SRP54 subfamily. As to quaternary structure, part of the signal recognition particle protein translocation system, which is composed of SRP and FtsY. SRP is a ribonucleoprotein composed of Ffh and a 4.5S RNA molecule.

The protein localises to the cytoplasm. It carries out the reaction GTP + H2O = GDP + phosphate + H(+). Functionally, involved in targeting and insertion of nascent membrane proteins into the cytoplasmic membrane. Binds to the hydrophobic signal sequence of the ribosome-nascent chain (RNC) as it emerges from the ribosomes. The SRP-RNC complex is then targeted to the cytoplasmic membrane where it interacts with the SRP receptor FtsY. Interaction with FtsY leads to the transfer of the RNC complex to the Sec translocase for insertion into the membrane, the hydrolysis of GTP by both Ffh and FtsY, and the dissociation of the SRP-FtsY complex into the individual components. This chain is Signal recognition particle protein, found in Buchnera aphidicola subsp. Baizongia pistaciae (strain Bp).